A 572-amino-acid polypeptide reads, in one-letter code: Phosphoenolpyruvate-protein phosphotransferase (572 aa).

The active-site Tele-phosphohistidine intermediate is the H191. R298 and R334 together coordinate phosphoenolpyruvate. Mg(2+) is bound by residues E433 and D457. Residues 456–457 (ND) and R467 each bind phosphoenolpyruvate. The active-site Proton donor is the C504.

This sequence belongs to the PEP-utilizing enzyme family. In terms of assembly, homodimer. It depends on Mg(2+) as a cofactor.

The protein localises to the cytoplasm. It catalyses the reaction L-histidyl-[protein] + phosphoenolpyruvate = N(pros)-phospho-L-histidyl-[protein] + pyruvate. Functionally, general (non sugar-specific) component of the phosphoenolpyruvate-dependent sugar phosphotransferase system (sugar PTS). This major carbohydrate active-transport system catalyzes the phosphorylation of incoming sugar substrates concomitantly with their translocation across the cell membrane. Enzyme I transfers the phosphoryl group from phosphoenolpyruvate (PEP) to the phosphoryl carrier protein (HPr). In Staphylococcus epidermidis (strain ATCC 35984 / DSM 28319 / BCRC 17069 / CCUG 31568 / BM 3577 / RP62A), this protein is Phosphoenolpyruvate-protein phosphotransferase (ptsI).